The sequence spans 96 residues: MASGDLVRYVITVMLHEDTLTEINELNNYLTRDGFLLTMTDDEGNIHELGTNTFGLISTQSEEEIRELVSGLTQSATGKDPEITITTWEEWNSNRK.

This is an uncharacterized protein from Escherichia coli O157:H7.